Consider the following 715-residue polypeptide: Palmitoyltransferase ZDHHC5 (715 aa).

Residues 1–13 (MPAESGKRFKPSK) lie on the Cytoplasmic side of the membrane. The helical transmembrane segment at 14-34 (YVPVSAAAIFLVGATTLFFAF) threads the bilayer. Residues 35-38 (TCPG) are Extracellular-facing. A helical membrane pass occupies residues 39–59 (LSLYVSPAVPIYNAIMFLFVL). Over 60–148 (ANFSMATFMD…NCIGRRNYRY (89 aa)) the chain is Cytoplasmic. Y91 is subject to Phosphotyrosine; by LYN. A DHHC domain is found at 104–154 (KWCATCRFYRPPRCSHCSVCDNCVEEFDHHCPWVNNCIGRRNYRYFFLFLL). The active-site S-palmitoyl cysteine intermediate is C134. A helical transmembrane segment spans residues 149–169 (FFLFLLSLTAHIMGVFGFGLL). Over 170 to 191 (YVLYHIEELSGVRTAVTMAVMC) the chain is Extracellular. A helical membrane pass occupies residues 192-212 (VAGLFFIPVAGLTGFHVVLVA). Residues 213–715 (RGRTTNEQVT…VGGTTYEISV (503 aa)) are Cytoplasmic-facing. The residue at position 247 (S247) is a Phosphoserine. Residues 289-715 (GELRRTKSKG…VGGTTYEISV (427 aa)) form a disordered region. Phosphothreonine is present on T294. Phosphoserine occurs at positions 296 and 299. The residue at position 303 (T303) is a Phosphothreonine. The residue at position 345 (S345) is a Phosphoserine. A phosphothreonine mark is found at T348 and T350. Over residues 359-373 (SSSSTSAAMPHSSSA) the composition is skewed to low complexity. S380, S398, S406, and S409 each carry phosphoserine. A Phosphothreonine modification is found at T411. Residues S415, S425, S429, and S432 each carry the phosphoserine modification. The span at 422–432 (SSGSRSSSLKS) shows a compositional bias: low complexity. T436 bears the Phosphothreonine mark. Positions 442–478 (QLQSIRSEGTTSTSYKSLANQTRNGSLSYDSLLTPSD) are enriched in polar residues. Position 529 is a phosphoserine (S529). Residue Y533 is modified to Phosphotyrosine; by FYN. S554 is modified (phosphoserine). R617 carries the omega-N-methylarginine modification. Residue S621 is modified to Phosphoserine. T659 carries the phosphothreonine modification. Polar residues predominate over residues 666–677 (LKTTYSKSNGQP). Phosphoserine occurs at positions 684 and 694. R697 is modified (omega-N-methylarginine).

This sequence belongs to the DHHC palmitoyltransferase family. ERF2/ZDHHC9 subfamily. In terms of processing, phosphorylation regulates association with endocytic proteins and its subcellular localization. Phosphorylation by LYN during fatty acid uptake leads to inactivation of the activity. Autopalmitoylated. Palmitoylation of the C-terminal tail regulates stimulation-dependent plasma membrane motility.

The protein localises to the cell membrane. It localises to the synapse. It catalyses the reaction L-cysteinyl-[protein] + hexadecanoyl-CoA = S-hexadecanoyl-L-cysteinyl-[protein] + CoA. Its function is as follows. Palmitoyltransferase that catalyzes the addition of palmitate onto various protein substrates such as CTNND2, CD36, GSDMD, NLRP3, NOD1, NOD2, STAT3 and S1PR1 thus plays a role in various biological processes including cell adhesion, inflammation, fatty acid uptake, bacterial sensing or cardiac functions. Plays an important role in the regulation of synapse efficacy by mediating palmitoylation of delta-catenin/CTNND2, thereby increasing synaptic delivery and surface stabilization of alpha-amino-3-hydroxy-5-methyl-4-isoxazole propionic acid receptors (AMPARs). Under basal conditions, remains at the synaptic membrane through FYN-mediated phosphorylation that prevents association with endocytic proteins. Neuronal activity enhances the internalization and trafficking of DHHC5 from spines to dendritic shafts where it palmitoylates delta-catenin/CTNND2. Regulates cell adhesion at the plasma membrane by palmitoylating GOLGA7B and DSG2. Plays a role in innate immune response by mediating the palmitoylation of NOD1 and NOD2 and their proper recruitment to the bacterial entry site and phagosomes. Also participates in fatty acid uptake by palmitoylating CD36 and thereby targeting it to the plasma membrane. Upon binding of fatty acids to CD36, gets phosphorylated by LYN leading to inactivation and subsequent CD36 caveolar endocytosis. Controls oligodendrocyte development by catalyzing STAT3 palmitoylation. Acts as a regulator of inflammatory response by mediating palmitoylation of NLRP3 and GSDMD. Palmitoylates NLRP3 to promote inflammasome assembly and activation. Activates pyroptosis by catalyzing palmitoylation of gasdermin-D (GSDMD), thereby promoting membrane translocation and pore formation of GSDMD. The chain is Palmitoyltransferase ZDHHC5 from Homo sapiens (Human).